The chain runs to 173 residues: Protein sym1 (173 aa).

A run of 4 helical transmembrane segments spans residues 12-32, 52-72, 129-149, and 151-171; these read QPILTASVTSAVLFGSGDVLA, MALYGGAIFGPAATTWFGFLQ, ANLTIWPLVQGVNFSIVPLEY, and VLVVNLVSLGWNCLLSMINSG.

The protein belongs to the peroxisomal membrane protein PXMP2/4 family.

It is found in the mitochondrion inner membrane. Its function is as follows. May be involved in cellular response to stress. Required to maintain mitochondrial DNA (mtDNA) integrity and stability. The sequence is that of Protein sym1 (sym1) from Aspergillus oryzae (strain ATCC 42149 / RIB 40) (Yellow koji mold).